The following is a 976-amino-acid chain: Ephrin type-A receptor 1 (976 aa).

A signal peptide spans 1–25 (MERRWPLGLGLVLLLCAPLPPGARA). Over 26 to 547 (KEVTLMDTSK…PVSRGLTGGE (522 aa)) the chain is Extracellular. Positions 27-209 (EVTLMDTSKA…FYQRCPETLN (183 aa)) constitute an Eph LBD domain. Fibronectin type-III domains are found at residues 332–445 (PPSA…MGHA) and 447–538 (SLSG…TSPP). N-linked (GlcNAc...) asparagine glycosylation is present at asparagine 414. A helical membrane pass occupies residues 548-568 (IVAVIFGLLLGAALLLGILVF). Residues 569-976 (RSRRAQRQRQ…ILCSIQGFKD (408 aa)) are Cytoplasmic-facing. A phosphotyrosine; by autocatalysis mark is found at tyrosine 599 and tyrosine 605. One can recognise a Protein kinase domain in the interval 624–884 (LMVDTVIGEG…KLQAHLEQLL (261 aa)). Residues 630–638 (IGEGEFGEV) and lysine 656 each bind ATP. The Proton acceptor role is filled by aspartate 749. Tyrosine 781 bears the Phosphotyrosine; by autocatalysis mark. Residues serine 906 and serine 910 each carry the phosphoserine modification. The 64-residue stretch at 913 to 976 (IPYRTVSEWL…ILCSIQGFKD (64 aa)) folds into the SAM domain. At tyrosine 930 the chain carries Phosphotyrosine; by autocatalysis. The PDZ-binding motif lies at 974–976 (FKD).

Belongs to the protein kinase superfamily. Tyr protein kinase family. Ephrin receptor subfamily. In terms of assembly, homodimer. Forms a signaling complex with LCK; PTK2B/PYK2 and PI3-kinase upon activation by EFNA1; regulates T-lymphocytes migration. Interacts (via SAM domain) with ILK (via ANK repeats); stimulated by EFNA1 but independent of the kinase activity of EPHA1. Interacts (kinase activity-dependent) with PTK2/FAK1. In terms of processing, phosphorylated. Autophosphorylation is stimulated by its ligand EFNA1. Post-translationally, ubiquitinated. Overexpressed in several carcinomas.

The protein localises to the cell membrane. It catalyses the reaction L-tyrosyl-[protein] + ATP = O-phospho-L-tyrosyl-[protein] + ADP + H(+). In terms of biological role, receptor tyrosine kinase which binds promiscuously membrane-bound ephrin-A family ligands residing on adjacent cells, leading to contact-dependent bidirectional signaling into neighboring cells. The signaling pathway downstream of the receptor is referred to as forward signaling while the signaling pathway downstream of the ephrin ligand is referred to as reverse signaling. Binds with a low affinity EFNA3 and EFNA4 and with a high affinity to EFNA1 which most probably constitutes its cognate/functional ligand. Upon activation by EFNA1 induces cell attachment to the extracellular matrix inhibiting cell spreading and motility through regulation of ILK and downstream RHOA and RAC. Also plays a role in angiogenesis and regulates cell proliferation. May play a role in apoptosis. This Homo sapiens (Human) protein is Ephrin type-A receptor 1 (EPHA1).